The following is a 91-amino-acid chain: Large ribosomal subunit protein eL31 (91 aa).

Belongs to the eukaryotic ribosomal protein eL31 family.

The polypeptide is Large ribosomal subunit protein eL31 (Pyrobaculum calidifontis (strain DSM 21063 / JCM 11548 / VA1)).